A 348-amino-acid polypeptide reads, in one-letter code: D-amino-acid oxidase (348 aa).

Residues A15, I18, K40, S52, G56, and N58 each contribute to the FAD site. Residues Y232 and R295 each contribute to the (R)-lactate site. Positions 232 and 295 each coordinate anthranilate. 5 residues coordinate FAD: R295, S323, G326, Y327, and Q328.

It belongs to the DAMOX/DASOX family. The cofactor is FAD.

Its subcellular location is the peroxisome. It carries out the reaction a D-alpha-amino acid + O2 + H2O = a 2-oxocarboxylate + H2O2 + NH4(+). The catalysed reaction is D-serine + O2 + H2O = 3-hydroxypyruvate + H2O2 + NH4(+). The enzyme catalyses D-alanine + O2 + H2O = pyruvate + H2O2 + NH4(+). It catalyses the reaction D-arginine + O2 + H2O = 5-guanidino-2-oxopentanoate + H2O2 + NH4(+). Catalyzes the oxidative deamination of D-amino acids with broad substrate specificity. Enables the organism to utilize D-amino acids as a source of nutrients. The polypeptide is D-amino-acid oxidase (Schizosaccharomyces pombe (strain 972 / ATCC 24843) (Fission yeast)).